Here is a 145-residue protein sequence, read N- to C-terminus: Copper transporter 4 (145 aa).

Transmembrane regions (helical) follow at residues 53–73 (GMYA…EWLA) and 106–126 (YLVI…AIFG).

Belongs to the copper transporter (Ctr) (TC 1.A.56) family. SLC31A subfamily. As to expression, highly expressed in roots and at lower levels in leaves, stems and flowers.

It is found in the membrane. Functionally, involved in the transport of copper. This chain is Copper transporter 4 (COPT4), found in Arabidopsis thaliana (Mouse-ear cress).